A 438-amino-acid chain; its full sequence is Dolichyl-diphosphooligosaccharide--protein glycosyltransferase 48 kDa subunit (438 aa).

The N-terminal stretch at 1–25 (MASLRLSVLLVSVSWLLLLVSGLRA) is a signal peptide. Topologically, residues 26 to 408 (GPRTLVLMEN…QYERFIPSAY (383 aa)) are lumenal. Residues 409–429 (PYYASAFSVMFGLFIFSIVFL) traverse the membrane as a helical segment. The Cytoplasmic portion of the chain corresponds to 430 to 438 (HMKEKEKSD).

It belongs to the DDOST 48 kDa subunit family. In terms of assembly, component of the oligosaccharyltransferase (OST) complex.

The protein resides in the endoplasmic reticulum membrane. The protein operates within protein modification; protein glycosylation. Subunit of the oligosaccharyl transferase (OST) complex that catalyzes the initial transfer of a defined glycan (Glc(3)Man(9)GlcNAc(2) in eukaryotes) from the lipid carrier dolichol-pyrophosphate to an asparagine residue within an Asn-X-Ser/Thr consensus motif in nascent polypeptide chains, the first step in protein N-glycosylation. N-glycosylation occurs cotranslationally and the complex associates with the Sec61 complex at the channel-forming translocon complex that mediates protein translocation across the endoplasmic reticulum (ER). All subunits are required for a maximal enzyme activity. Required for the assembly of both SST3A- and SS3B-containing OST complexes. This chain is Dolichyl-diphosphooligosaccharide--protein glycosyltransferase 48 kDa subunit, found in Xenopus laevis (African clawed frog).